A 495-amino-acid polypeptide reads, in one-letter code: Ribitol 5-phosphate transferase FKRP (495 aa).

Residues 1-6 (MRLTRC) lie on the Cytoplasmic side of the membrane. Residues 7–29 (QAALAAAITLNLLVLFYVSWLQH) traverse the membrane as a helical segment. Residues 30-495 (QPRNSRARGP…PALLSLTGSG (466 aa)) are Lumenal-facing. Cysteines 168 and 191 form a disulfide. Asn172 and Asn209 each carry an N-linked (GlcNAc...) asparagine glycan. Cys289, Cys296, Cys317, and Cys318 together coordinate Zn(2+). Residues 289–318 (CNKETTRCFGTVVGDTPAYLYEERWTPPCC) are zinc finger loop. CDP-L-ribitol is bound by residues Gly345, Arg352, 359–364 (WDYDVD), 437–438 (QD), and 480–482 (NPQ). Mg(2+) is bound by residues Asp360, Asp362, and Asp364.

This sequence belongs to the LicD transferase family. As to quaternary structure, homodimer; disulfide-linked. Tetramer. Forms a complex composed of FKRP, FKTN/fukutin, and RXYLT1/TMEM5. Also exists as large multimeric protein complexes. May interact with the dystrophin-glycoprotein complex (DGC). Mg(2+) serves as cofactor. In terms of processing, N-glycosylated. In terms of tissue distribution, expressed in the retina (at protein level). Expressed predominantly in skeletal muscle, placenta, and heart and relatively weakly in brain, lung, liver, kidney, and pancreas.

Its subcellular location is the golgi apparatus membrane. It localises to the secreted. The protein resides in the cell membrane. It is found in the sarcolemma. The protein localises to the rough endoplasmic reticulum. Its subcellular location is the cytoplasm. It catalyses the reaction 3-O-[Rib-ol-P-3-beta-D-GalNAc-(1-&gt;3)-beta-D-GlcNAc-(1-&gt;4)-(O-6-P-alpha-D-Man)]-Thr-[protein] + CDP-L-ribitol = 3-O-[Rib-ol-P-Rib-ol-P-3-beta-D-GalNAc-(1-&gt;3)-beta-D-GlcNAc-(1-&gt;4)-(O-6-P-alpha-D-Man)]-Thr-[protein] + CMP + H(+). Its pathway is protein modification; protein glycosylation. Its function is as follows. Catalyzes the transfer of a ribitol 5-phosphate from CDP-L-ribitol to the ribitol 5-phosphate previously attached by FKTN/fukutin to the phosphorylated O-mannosyl trisaccharide (N-acetylgalactosamine-beta-3-N-acetylglucosamine-beta-4-(phosphate-6-)mannose), a carbohydrate structure present in alpha-dystroglycan (DAG1). This constitutes the second step in the formation of the ribose 5-phosphate tandem repeat which links the phosphorylated O-mannosyl trisaccharide to the ligand binding moiety composed of repeats of 3-xylosyl-alpha-1,3-glucuronic acid-beta-1. In Homo sapiens (Human), this protein is Ribitol 5-phosphate transferase FKRP.